A 555-amino-acid chain; its full sequence is Probable apyrase 6 (555 aa).

The segment covering 1-10 (MRRSHARSRV) has biased composition (basic residues). The interval 1-45 (MRRSHARSRVKNSSSSKSDMDPIKFQIRSGNRAPSSSSTYTLTKP) is disordered. Residues 1–55 (MRRSHARSRVKNSSSSKSDMDPIKFQIRSGNRAPSSSSTYTLTKPNSKHAKSNLL) are Cytoplasmic-facing. Over residues 28–45 (RSGNRAPSSSSTYTLTKP) the composition is skewed to polar residues. Residues 56-76 (LTVGSISVVLGVLFLCYSILF) traverse the membrane as a helical segment. At 77 to 512 (SGGNLRGSLR…HALFSNHPKT (436 aa)) the chain is on the extracellular side. Position 89–99 (89–99 (VVIDGGSTGTR)) interacts with ATP. The active-site Proton acceptor is the E212. 236 to 246 (GIVELGGASAQ) serves as a coordination point for ATP. N-linked (GlcNAc...) asparagine glycans are attached at residues N267 and N348. The helical transmembrane segment at 513 to 533 (LHYLIGIPILMTVLVYLVTKW) threads the bilayer. The Cytoplasmic segment spans residues 534–555 (RKPQLKTIYDLEKGRYIVTRIR).

It belongs to the GDA1/CD39 NTPase family. Ca(2+) is required as a cofactor. In terms of tissue distribution, detected in mature pollen grains (at the protein level). Also expressed in the veins and hydathode regions of rosette leaves.

It localises to the cytoplasmic vesicle membrane. It carries out the reaction a ribonucleoside 5'-triphosphate + 2 H2O = a ribonucleoside 5'-phosphate + 2 phosphate + 2 H(+). Catalyzes the hydrolysis of phosphoanhydride bonds of nucleoside tri- and di-phosphates. Involved in the regulation of pollen and anther development. The polypeptide is Probable apyrase 6 (APY6) (Arabidopsis thaliana (Mouse-ear cress)).